A 400-amino-acid chain; its full sequence is Tryptophan synthase beta chain (400 aa).

An N6-(pyridoxal phosphate)lysine modification is found at Lys90.

The protein belongs to the TrpB family. In terms of assembly, tetramer of two alpha and two beta chains. The cofactor is pyridoxal 5'-phosphate.

The enzyme catalyses (1S,2R)-1-C-(indol-3-yl)glycerol 3-phosphate + L-serine = D-glyceraldehyde 3-phosphate + L-tryptophan + H2O. It functions in the pathway amino-acid biosynthesis; L-tryptophan biosynthesis; L-tryptophan from chorismate: step 5/5. Its function is as follows. The beta subunit is responsible for the synthesis of L-tryptophan from indole and L-serine. The protein is Tryptophan synthase beta chain of Alkaliphilus metalliredigens (strain QYMF).